Reading from the N-terminus, the 202-residue chain is Transmembrane 4 L6 family member 4 (202 aa).

The Cytoplasmic portion of the chain corresponds to 1–9; sequence MCTGGCARC. A helical membrane pass occupies residues 10–30; that stretch reads LGGTLIPLAVFAVLANILLFF. Over 31-48 the chain is Extracellular; the sequence is PGGKVVDDNSHLSDEVWY. Residues 49–69 traverse the membrane as a helical segment; the sequence is FGGILGSGVLMIFPALVFLGL. Residues 70 to 93 lie on the Cytoplasmic side of the membrane; sequence QNNDCCGCCGNESCGKRFAMFTST. Residues 94–114 form a helical membrane-spanning segment; sequence LFAVVGFLGAAYSFIVSAVSI. At 115 to 158 the chain is on the extracellular side; it reads NKGPKCFMTNNTWGYPFHDGDYLNDQALWSKCEEPRDVVPWNLT. The N-linked (GlcNAc...) asparagine glycan is linked to Asn-156. A helical membrane pass occupies residues 159–179; the sequence is LFSILLVIGGIQMVLCAIQVI. The Cytoplasmic portion of the chain corresponds to 180 to 202; sequence NGLLGTLCGDCQCCGCCGGDRPV.

The protein belongs to the L6 tetraspanin family. Expressed in liver and testis. Up-regulated in regenerating liver after partial hepatectomy.

Its subcellular location is the membrane. Regulates the adhesive and proliferative status of intestinal epithelial cells. Can mediate density-dependent cell proliferation. The sequence is that of Transmembrane 4 L6 family member 4 (Tm4sf4) from Rattus norvegicus (Rat).